The primary structure comprises 300 residues: HTH-type transcriptional regulator ArgP (300 aa).

Positions 4 to 60 constitute an HTH lysR-type domain; the sequence is PDYRTLQALDAVIRERGFERAAQKLCITQSAVSQRIKQLENLFGQPLLVRTVPPRPT. Positions 21 to 40 form a DNA-binding region, H-T-H motif; sequence FERAAQKLCITQSAVSQRIK.

It belongs to the LysR transcriptional regulatory family. Homodimer.

Controls the transcription of genes involved in arginine and lysine metabolism. The polypeptide is HTH-type transcriptional regulator ArgP (Photorhabdus laumondii subsp. laumondii (strain DSM 15139 / CIP 105565 / TT01) (Photorhabdus luminescens subsp. laumondii)).